A 664-amino-acid chain; its full sequence is DNA mismatch repair protein MutL (664 aa).

The interval 382–447 (RKAGQEQQLQ…YGEPAPSKQQ (66 aa)) is disordered. Over residues 427–436 (RHTTSSNQSE) the composition is skewed to polar residues.

The protein belongs to the DNA mismatch repair MutL/HexB family.

This protein is involved in the repair of mismatches in DNA. It is required for dam-dependent methyl-directed DNA mismatch repair. May act as a 'molecular matchmaker', a protein that promotes the formation of a stable complex between two or more DNA-binding proteins in an ATP-dependent manner without itself being part of a final effector complex. The polypeptide is DNA mismatch repair protein MutL (Vibrio vulnificus (strain CMCP6)).